The chain runs to 79 residues: RNA-binding protein KhpA (79 aa).

In terms of domain architecture, KH spans 32-79 (FLEYHLNLDQSDVGRVIGRKGRTISAIRTIVYSVPTEYKKVRIVIDEK).

This sequence belongs to the KhpA RNA-binding protein family. Forms a complex with KhpB. KhpA and KhpB colocalize throughout the cell cycle, with some increase at midcell in dividing cells.

Its subcellular location is the cytoplasm. Functionally, a probable RNA chaperone. Forms a complex with KhpB which presumably binds to about 170 cellular RNAs (mRNA, tRNA intergenic RNA and sRNAs); the proteins alone each bind the same set of RNAs. A mutation in this gene suppresses the requirement for PBP2b (penA, a transpeptidase) in peripheral peptidoglycan (PG) synthesis. Probably plays a role in PG homeostasis and regulating peripheral PG synthesis. The protein is RNA-binding protein KhpA of Streptococcus pneumoniae serotype 2 (strain D39 / NCTC 7466).